Here is a 227-residue protein sequence, read N- to C-terminus: Cytidylate kinase (227 aa).

An ATP-binding site is contributed by glycine 10–threonine 18.

This sequence belongs to the cytidylate kinase family. Type 1 subfamily.

The protein localises to the cytoplasm. It carries out the reaction CMP + ATP = CDP + ADP. It catalyses the reaction dCMP + ATP = dCDP + ADP. The sequence is that of Cytidylate kinase from Streptococcus mutans serotype c (strain ATCC 700610 / UA159).